Here is a 380-residue protein sequence, read N- to C-terminus: uncharacterized protein (380 aa).

Residues 256-301 adopt a coiled-coil conformation; sequence DKEEKIQKSYQYQTELITELQGRIAELEKENQSLKENVKEPETSKP.

This is an uncharacterized protein from Pasteurella multocida (strain Pm70).